Reading from the N-terminus, the 198-residue chain is Endonuclease V (198 aa).

Mg(2+)-binding residues include aspartate 38 and aspartate 101.

This sequence belongs to the endonuclease V family. Requires Mg(2+) as cofactor.

It localises to the cytoplasm. The enzyme catalyses Endonucleolytic cleavage at apurinic or apyrimidinic sites to products with a 5'-phosphate.. DNA repair enzyme involved in the repair of deaminated bases. Selectively cleaves double-stranded DNA at the second phosphodiester bond 3' to a deoxyinosine leaving behind the intact lesion on the nicked DNA. The sequence is that of Endonuclease V from Saccharolobus islandicus (strain Y.N.15.51 / Yellowstone #2) (Sulfolobus islandicus).